The primary structure comprises 635 residues: ADP-ribosylation factor-binding protein GGA1 (635 aa).

Met1 carries the post-translational modification N-acetylmethionine. The 131-residue stretch at 17–147 (ATNPLNKELN…MLKKQGIVKS (131 aa)) folds into the VHS domain. The tract at residues 114-273 (KILELLYSWT…RLASDTEDND (160 aa)) is interaction with ARF3. The region spanning 171–298 (DEEKSKMLAR…VINLYKQLVR (128 aa)) is the GAT domain. Ser185 is modified (phosphoserine). Positions 299-505 (GEEVNGDATA…ITVPLESIKP (207 aa)) are unstructured hinge. The segment at 305 to 349 (DATASSIPGSTSALLDLSGLDLPPPGTTQPATPTRPGNQSSPEQL) is disordered. Positions 313–325 (GSTSALLDLSGLD) are enriched in low complexity. A Phosphoserine modification is found at Ser354. The short motif at 357–361 (DDELM) is the Autoinhibitory element. Disordered regions lie at residues 362 to 422 (SLGL…LDDL) and 455 to 490 (RDLQ…TPTE). The segment covering 383–393 (NFQSSDGTESS) has biased composition (polar residues). The residue at position 417 (Ser417) is a Phosphoserine. Positions 459–476 (SKSSSPSPGAASLLHTTS) are enriched in low complexity. Pro residues predominate over residues 477 to 486 (PEPPGPPPQA). In terms of domain architecture, GAE spans 506–627 (SSILPVTVYD…NEMGDVDQFP (122 aa)).

Belongs to the GGA protein family. Monomer. Interacts with GGA2 and GGA3. Binds to clathrin and activated ARFs, including ARF1, ARF5 and ARF6. Interacts with RABEP1 and RABGEF1. Interacts with the type-I membrane proteins LRP3, M6PR/CD-MPR and IGF2R/CI-MPR. Interacts (via N-terminal VHS domain) with SORL1/sorLA and SORT1 (via C-terminal cytosolic domain). Interacts with EPN4. Interacts with CCDC91. Interacts with HEATR5B/p200a. Interacts with SYNRG/gamma-synergin. Interacts (via GAE doamin) with NECAP1 and NECAP2. Interacts (via GAE domain) with AFTPH/aftiphilin. Interacts with TSG101 and UBC. Interacts with RNF11. Interacts (via VHS domain) with BACE1 (via DXXLL motif); the interaction highly increases when BACE1 is phosphorylated at 'Ser-498'. Interacts with CNST. Interacts with ADRA2B. Interacts with ARL3; the interaction recruits, in collaboration with RABEP1, PKD1:PKD2 complex to trans-Golgi network and is required for ciliary targeting. In terms of processing, phosphorylated by CK2 and dephosphorylated by PP2A. Phosphorylation of GGA1 allows the internal DXXLL motif to bind the VHS domain and to inhibit the recognition of cargo signals. Post-translationally, ubiquitinated.

The protein localises to the golgi apparatus. It localises to the trans-Golgi network membrane. The protein resides in the endosome membrane. It is found in the early endosome membrane. In terms of biological role, plays a role in protein sorting and trafficking between the trans-Golgi network (TGN) and endosomes. Mediates the ARF-dependent recruitment of clathrin to the TGN and binds ubiquitinated proteins and membrane cargo molecules with a cytosolic acidic cluster-dileucine (DXXLL) motif. Mediates export of the GPCR receptor ADRA2B to the cell surface. Required for targeting PKD1:PKD2 complex from the trans-Golgi network to the cilium membrane. Regulates retrograde transport of proteins such as phosphorylated form of BACE1 from endosomes to the trans-Golgi network. The sequence is that of ADP-ribosylation factor-binding protein GGA1 (Gga1) from Mus musculus (Mouse).